A 374-amino-acid polypeptide reads, in one-letter code: MAMPPPLFAAASHASLLLPSPTIHSSTGSRRPFRLPLRSSRRPPVAAAAASGVPDEWGDRSPSAPEPPSQPDPPIDDDEWGRDDPSASGNSRPVLVTDEWGEPGVPEPQSTSAADPPTNDDEWGGDPAPPPPPPPVPEEDNEEERREELKRCLVDTVYGSDLGFRASSEVRGEVLELVTQLEATNPTPEPVQATHLLAGNWILIYTAYSELLPILAVGAAPLFKVDEISQEIDTNSMTIVNASTISSPFASFSFSATASFDVQSPSRIEVQFKEGSFQPPKISSSVDLPAEVDIFGQKISLGPVQQVLNPLQQAFASIAGSISGQPPLKLPIPGNNRARSWLLTTYLDKDLRISRGDGGLFILVKEGSPLLDQL.

The N-terminal 46 residues, 1-46 (MAMPPPLFAAASHASLLLPSPTIHSSTGSRRPFRLPLRSSRRPPVA), are a transit peptide targeting the chloroplast. The disordered stretch occupies residues 19–148 (PSPTIHSSTG…EDNEEERREE (130 aa)). Residues 28–54 (GSRRPFRLPLRSSRRPPVAAAAASGVP) show a composition bias toward low complexity. 2 stretches are compositionally biased toward pro residues: residues 64-73 (APEPPSQPDP) and 127-136 (PAPPPPPPPV).

Belongs to the PAP/fibrillin family.

Its subcellular location is the plastid. It localises to the chloroplast. The polypeptide is Probable plastid-lipid-associated protein 3, chloroplastic (PAP3) (Oryza sativa subsp. japonica (Rice)).